Consider the following 510-residue polypeptide: Beta-glucosidase 26 (510 aa).

An N-terminal signal peptide occupies residues 1–27 (MRKFIAALRLALAAAAHLLLTLPPAQC). Gln59 lines the a beta-D-glucoside pocket. N-linked (GlcNAc...) asparagine glycosylation is found at Asn87 and Asn127. Residues His160 and 205–206 (NE) contribute to the a beta-D-glucoside site. The active-site Proton donor is the Glu206. Cysteines 225 and 228 form a disulfide. An N-linked (GlcNAc...) asparagine glycan is attached at Asn233. A beta-D-glucoside contacts are provided by Tyr345 and Glu416. The Nucleophile role is filled by Glu416. A glycan (N-linked (GlcNAc...) asparagine) is linked at Asn424. Residues Trp463, 470–471 (EW), and Phe479 contribute to the a beta-D-glucoside site.

This sequence belongs to the glycosyl hydrolase 1 family.

It carries out the reaction Hydrolysis of terminal, non-reducing beta-D-glucosyl residues with release of beta-D-glucose.. In terms of biological role, hydrolyzes p-nitrophenyl beta-D-glucoside, p-nitrophenyl beta-D-mannoside, p-nitrophenyl beta-D-galactoside, p-nitrophenyl beta-D-xyloside, p-nitrophenyl beta-D-fucoside, p-nitrophenyl beta-L-arabinoside, cello-oligosaccharides, laminari-oligosaccharides and sophorose. The polypeptide is Beta-glucosidase 26 (BGLU26) (Oryza sativa subsp. japonica (Rice)).